An 88-amino-acid polypeptide reads, in one-letter code: Small ribosomal subunit protein bS20 (88 aa).

This sequence belongs to the bacterial ribosomal protein bS20 family.

Functionally, binds directly to 16S ribosomal RNA. The polypeptide is Small ribosomal subunit protein bS20 (Rhodospirillum rubrum (strain ATCC 11170 / ATH 1.1.1 / DSM 467 / LMG 4362 / NCIMB 8255 / S1)).